Consider the following 596-residue polypeptide: Leucine zipper putative tumor suppressor 1 (596 aa).

Residue G2 is the site of N-myristoyl glycine attachment. Disordered regions lie at residues A136–L193 and Y295–S324. The segment covering P153 to L162 has biased composition (basic and acidic residues). Positions S178–S190 are enriched in low complexity. Positions I256–G374 form a coiled coil. A compositionally biased stretch (basic and acidic residues) spans Y295 to E310.

Belongs to the LZTS family. As to quaternary structure, binds EEF1G, TLK2 and CDK1. Phosphorylated on serine residues. Hyperphosphorylated by the cAMP-dependent kinase PKA during cell-cycle progression. Highly expressed in testis, prostate, spleen, thymus, ovary and brain. Detected at lower levels in heart, placenta, small intestine, colon, liver, kidney, skeletal muscle and pancreas. Not detectable in primary tumors from breast and prostate and in many cancer cell lines.

It localises to the cytoplasm. The protein localises to the cell membrane. The protein resides in the cell projection. Its subcellular location is the dendritic spine. It is found in the postsynaptic density. It localises to the synapse. In terms of biological role, involved in the regulation of cell growth. May stabilize the active CDC2-cyclin B1 complex and thereby contribute to the regulation of the cell cycle and the prevention of uncontrolled cell proliferation. May act as a tumor suppressor. The chain is Leucine zipper putative tumor suppressor 1 (LZTS1) from Homo sapiens (Human).